A 207-amino-acid polypeptide reads, in one-letter code: Large ribosomal subunit protein uL4 (207 aa).

The interval 48–86 (THKVKNRSEVRGGGRKPWRQKGTGRARQGSIRSPQWRGG) is disordered. Positions 60 to 71 (GGRKPWRQKGTG) are enriched in basic residues.

It belongs to the universal ribosomal protein uL4 family. In terms of assembly, part of the 50S ribosomal subunit.

One of the primary rRNA binding proteins, this protein initially binds near the 5'-end of the 23S rRNA. It is important during the early stages of 50S assembly. It makes multiple contacts with different domains of the 23S rRNA in the assembled 50S subunit and ribosome. Functionally, forms part of the polypeptide exit tunnel. The chain is Large ribosomal subunit protein uL4 from Bacillus licheniformis (strain ATCC 14580 / DSM 13 / JCM 2505 / CCUG 7422 / NBRC 12200 / NCIMB 9375 / NCTC 10341 / NRRL NRS-1264 / Gibson 46).